A 255-amino-acid chain; its full sequence is uncharacterized protein (255 aa).

Positions 1 to 23 (MKRLNKLVLGIIFLFLVISITAG) are cleaved as a signal peptide. Cysteine 24 carries the N-palmitoyl cysteine lipid modification. The S-diacylglycerol cysteine moiety is linked to residue cysteine 24.

Belongs to the staphylococcal tandem lipoprotein family.

The protein resides in the cell membrane. This is an uncharacterized protein from Staphylococcus aureus (strain USA300).